A 260-amino-acid chain; its full sequence is 3-methyl-2-oxobutanoate hydroxymethyltransferase (260 aa).

Residues Asp44 and Asp83 each coordinate Mg(2+). 3-methyl-2-oxobutanoate is bound by residues 44 to 45 (DS), Asp83, and Lys113. Glu115 serves as a coordination point for Mg(2+). Glu182 functions as the Proton acceptor in the catalytic mechanism.

It belongs to the PanB family. As to quaternary structure, homodecamer; pentamer of dimers. It depends on Mg(2+) as a cofactor.

The protein resides in the cytoplasm. The enzyme catalyses 3-methyl-2-oxobutanoate + (6R)-5,10-methylene-5,6,7,8-tetrahydrofolate + H2O = 2-dehydropantoate + (6S)-5,6,7,8-tetrahydrofolate. Its pathway is cofactor biosynthesis; (R)-pantothenate biosynthesis; (R)-pantoate from 3-methyl-2-oxobutanoate: step 1/2. Functionally, catalyzes the reversible reaction in which hydroxymethyl group from 5,10-methylenetetrahydrofolate is transferred onto alpha-ketoisovalerate to form ketopantoate. This Synechocystis sp. (strain ATCC 27184 / PCC 6803 / Kazusa) protein is 3-methyl-2-oxobutanoate hydroxymethyltransferase.